The sequence spans 536 residues: C-22 sterol desaturase ERG5A (536 aa).

The helical transmembrane segment at 41-61 threads the bilayer; the sequence is VWTWVFTLVALCIAYDQIAYI. Position 481 (C481) interacts with heme.

Belongs to the cytochrome P450 family. Heme serves as cofactor.

The protein resides in the endoplasmic reticulum membrane. It catalyses the reaction 5-dehydroepisterol + NADPH + O2 + H(+) = ergosta-5,7,22,24(28)-tetraen-3beta-ol + NADP(+) + 2 H2O. It participates in steroid metabolism; ergosterol biosynthesis. C-22 sterol desaturase; part of the third module of ergosterol biosynthesis pathway that includes the late steps of the pathway. ERG5A and ERG5B convert 5-dehydroepisterol into ergosta-5,7,22,24(28)-tetraen-3beta-ol by forming the C-22(23) double bond in the sterol side chain. The third module or late pathway involves the ergosterol synthesis itself through consecutive reactions that mainly occur in the endoplasmic reticulum (ER) membrane. Firstly, the squalene synthase ERG9 catalyzes the condensation of 2 farnesyl pyrophosphate moieties to form squalene, which is the precursor of all steroids. Squalene synthase is crucial for balancing the incorporation of farnesyl diphosphate (FPP) into sterol and nonsterol isoprene synthesis. Secondly, squalene is converted into lanosterol by the consecutive action of the squalene epoxidase ERG1 and the lanosterol synthase ERG7. Then, the delta(24)-sterol C-methyltransferase ERG6 methylates lanosterol at C-24 to produce eburicol. Eburicol is the substrate of the sterol 14-alpha demethylase encoded by CYP51A, CYP51B and CYP51C, to yield 4,4,24-trimethyl ergosta-8,14,24(28)-trienol. CYP51B encodes the enzyme primarily responsible for sterol 14-alpha-demethylation, and plays an essential role in ascospore formation. CYP51A encodes an additional sterol 14-alpha-demethylase, induced on ergosterol depletion and responsible for the intrinsic variation in azole sensitivity. The third CYP51 isoform, CYP51C, does not encode a sterol 14-alpha-demethylase, but is required for full virulence on host wheat ears. The C-14 reductase ERG24 then reduces the C14=C15 double bond which leads to 4,4-dimethylfecosterol. A sequence of further demethylations at C-4, involving the C-4 demethylation complex containing the C-4 methylsterol oxidases ERG25, the sterol-4-alpha-carboxylate 3-dehydrogenase ERG26 and the 3-keto-steroid reductase ERG27, leads to the production of fecosterol via 4-methylfecosterol. ERG28 has a role as a scaffold to help anchor ERG25, ERG26 and ERG27 to the endoplasmic reticulum. The C-8 sterol isomerase ERG2 then catalyzes the reaction which results in unsaturation at C-7 in the B ring of sterols and thus converts fecosterol to episterol. The sterol-C5-desaturases ERG3A and ERG3BB then catalyze the introduction of a C-5 double bond in the B ring to produce 5-dehydroepisterol. The C-22 sterol desaturases ERG5A and ERG5B further convert 5-dehydroepisterol into ergosta-5,7,22,24(28)-tetraen-3beta-ol by forming the C-22(23) double bond in the sterol side chain. Finally, ergosta-5,7,22,24(28)-tetraen-3beta-ol is substrate of the C-24(28) sterol reductase ERG4 to produce ergosterol. This is C-22 sterol desaturase ERG5A from Gibberella zeae (strain ATCC MYA-4620 / CBS 123657 / FGSC 9075 / NRRL 31084 / PH-1) (Wheat head blight fungus).